The primary structure comprises 461 residues: Ubiquinone hydroxylase UbiM (461 aa).

The protein belongs to the UbiH/COQ6 family. It depends on FAD as a cofactor.

It catalyses the reaction a 2-(all-trans-polyprenyl)phenol + NADPH + O2 + H(+) = a 3-(all-trans-polyprenyl)benzene-1,2-diol + NADP(+) + H2O. It carries out the reaction a 5-methoxy-2-methyl-3-(all-trans-polyprenyl)benzene-1,4-diol + AH2 + O2 = a 3-demethylubiquinol + A + H2O. It participates in cofactor biosynthesis; ubiquinone biosynthesis. Functionally, catalyzes the hydroxylation of three positions of the aromatic ring during ubiquinone biosynthesis. The polypeptide is Ubiquinone hydroxylase UbiM (Neisseria meningitidis serogroup C / serotype 2a (strain ATCC 700532 / DSM 15464 / FAM18)).